A 945-amino-acid chain; its full sequence is MPDHEVQTRKSRMLDDAQEELNITVAVRCRGRNEREIKAKSSVVVTVPDVTGSNEVSINTTDEVGIAAKMNSRTYTVDKVFGPSADQSLIFKEIAEPLFDDFMKGYNCTVLVYGMTSTGKTYTMTGDEKLYDGQLSDSAGIIPRIMFKLFDALEATDSDFLVKCSYIELYNEELKDLLDESHDSSKRLRIFDSSSMNHSSRASSQSNSPREPEVAHNGFSRRRQRPPPVKANRMSATKQQLSESGSGIYVQNVQEFHIINAREGINVLQKGLKHRQVASTKMNDFSSRSHTIFTIMLYKNCDGELFRVSKMNLVDLAGSENISRSGAQNQRAKEAGSINQSLLTLGRVINSLADKSIHIPFRESKLTRLLQDSLGGNTKTALIATISPAKINADETSSTLEYAAKAKNIKNRPQLGALMMKDILVKNISSELAKIKSDFLSTKSKDGIYMSHEHYQEIVNDLENCQTEIQESKRQIESLTSQNNLLLKDKKASQEVTELQNSKIKKLQSTIEYLYDKIERQHHNETELATTIHKLKEALHTMQGSLKSYETHELRLQNDIKEVLYQGITSYRESMNQHLEKVKVSMLDKNLSIKENINNITTIFDDTLKSVEANGSDMCDTLVKLIKETPSMYLKEFNETVSSLKSELSSYSNALTNKLTEISEENNHLREYLDQHLFKNSTQEVLDLRMESVYQKVKNDSDQLLSKLVSMVGAHVEESRTLMVNSMKDTVNEIIDNERSLFQPIRDRWIASCDNINQCDASHQNFEAKSTSGLDKLKELSDASLKSSEDAVNKAKHRTDSFHDFVQKLCCDQSLKKQMHDISDKHRMLEDHFDDNVKYFKESSKGFEDMDCSIKKIIHEMSPEVGDIKSVETLMERINARTFSPVRPTGKTPSRQVLKNAITSKASSRSMSPIKTLDTNVRIISPVKRGTIEFGAEGPPTKKVR.

A Kinesin motor domain is found at 22–409; it reads NITVAVRCRG…LEYAAKAKNI (388 aa). 114 to 121 is a binding site for ATP; sequence GMTSTGKT. The interval 190 to 243 is disordered; that stretch reads IFDSSSMNHSSRASSQSNSPREPEVAHNGFSRRRQRPPPVKANRMSATKQQLSE. A compositionally biased stretch (low complexity) spans 193–208; that stretch reads SSSMNHSSRASSQSNS. A compositionally biased stretch (polar residues) spans 234–243; sequence MSATKQQLSE. 2 coiled-coil regions span residues 450–562 and 634–675; these read MSHE…DIKE and LKEF…YLDQ.

The protein belongs to the TRAFAC class myosin-kinesin ATPase superfamily. Kinesin family. BimC subfamily.

Its subcellular location is the cytoplasm. The protein localises to the cytoskeleton. It is found in the spindle. Elongates the mitotic spindle by interacting with spindle microtubules to generate an outward force pushing spindle poles apart. Following spindle assembly, CIN8 and KIP1 apparently act to oppose a force, possibly generated by KAR3, that draws separated poles back together. This Eremothecium gossypii (strain ATCC 10895 / CBS 109.51 / FGSC 9923 / NRRL Y-1056) (Yeast) protein is Kinesin-like protein CIN8 (CIN8).